The sequence spans 419 residues: Mitochondrial chaperone BCS1 (419 aa).

At 2–15 the chain is on the mitochondrial intermembrane side; it reads PLSDFILALKDNPY. A helical membrane pass occupies residues 16–32; it reads FGAGFGLVGVGTALALA. Residues 33–419 are Mitochondrial matrix-facing; the sequence is RKGVQLGLVA…AIHNAESLRR (387 aa). Y181 bears the Phosphotyrosine mark. 230–237 contributes to the ATP binding site; sequence GPPGCGKS.

It belongs to the AAA ATPase family. BCS1 subfamily. As to quaternary structure, interacts with LETM1. In terms of tissue distribution, ubiquitous.

It is found in the mitochondrion inner membrane. The catalysed reaction is ATP + H2O = ADP + phosphate + H(+). In terms of biological role, chaperone necessary for the incorporation of Rieske iron-sulfur protein UQCRFS1 into the mitochondrial respiratory chain complex III. Plays an important role in the maintenance of mitochondrial tubular networks, respiratory chain assembly and formation of the LETM1 complex. The polypeptide is Mitochondrial chaperone BCS1 (BCS1L) (Homo sapiens (Human)).